We begin with the raw amino-acid sequence, 1357 residues long: DNA-directed RNA polymerase subunit beta (1357 aa).

It belongs to the RNA polymerase beta chain family. The RNAP catalytic core consists of 2 alpha, 1 beta, 1 beta' and 1 omega subunit. When a sigma factor is associated with the core the holoenzyme is formed, which can initiate transcription.

It catalyses the reaction RNA(n) + a ribonucleoside 5'-triphosphate = RNA(n+1) + diphosphate. Functionally, DNA-dependent RNA polymerase catalyzes the transcription of DNA into RNA using the four ribonucleoside triphosphates as substrates. This Pseudomonas fluorescens (strain ATCC BAA-477 / NRRL B-23932 / Pf-5) protein is DNA-directed RNA polymerase subunit beta.